Reading from the N-terminus, the 127-residue chain is Arginine decarboxylase proenzyme (127 aa).

Ser-72 serves as the catalytic Schiff-base intermediate with substrate; via pyruvic acid. Ser-72 carries the post-translational modification Pyruvic acid (Ser); by autocatalysis. Catalysis depends on His-77, which acts as the Proton acceptor; for processing activity. Cys-92 acts as the Proton donor; for catalytic activity in catalysis.

The protein belongs to the prokaryotic AdoMetDC family. Type 1 subfamily. In terms of assembly, heterooctamer of four alpha and four beta chains arranged as a tetramer of alpha/beta heterodimers. It depends on pyruvate as a cofactor. Post-translationally, is synthesized initially as an inactive proenzyme. Formation of the active enzyme involves a self-maturation process in which the active site pyruvoyl group is generated from an internal serine residue via an autocatalytic post-translational modification. Two non-identical subunits are generated from the proenzyme in this reaction, and the pyruvate is formed at the N-terminus of the alpha chain, which is derived from the carboxyl end of the proenzyme. The post-translation cleavage follows an unusual pathway, termed non-hydrolytic serinolysis, in which the side chain hydroxyl group of the serine supplies its oxygen atom to form the C-terminus of the beta chain, while the remainder of the serine residue undergoes an oxidative deamination to produce ammonia and the pyruvoyl group blocking the N-terminus of the alpha chain.

The enzyme catalyses L-arginine + H(+) = agmatine + CO2. Its pathway is amine and polyamine biosynthesis; agmatine biosynthesis; agmatine from L-arginine: step 1/1. Its function is as follows. Specifically catalyzes the decarboxylation of L-arginine to agmatine. Has no S-adenosylmethionine decarboxylase (AdoMetDC) activity. This is Arginine decarboxylase proenzyme from Staphylothermus marinus (strain ATCC 43588 / DSM 3639 / JCM 9404 / F1).